Consider the following 625-residue polypeptide: Folylpolyglutamate synthase (625 aa).

141–144 is a binding site for ATP; it reads GKGS. Ser165, Glu234, and His262 together coordinate Mg(2+). ATP-binding residues include Arg384 and Asp414.

The protein belongs to the folylpolyglutamate synthase family. It depends on a monovalent cation as a cofactor.

The protein localises to the mitochondrion inner membrane. It is found in the mitochondrion matrix. The enzyme catalyses (6S)-5,6,7,8-tetrahydrofolyl-(gamma-L-Glu)(n) + L-glutamate + ATP = (6S)-5,6,7,8-tetrahydrofolyl-(gamma-L-Glu)(n+1) + ADP + phosphate + H(+). It functions in the pathway cofactor biosynthesis; tetrahydrofolylpolyglutamate biosynthesis. Catalyzes conversion of folates to polyglutamate derivatives allowing concentration of folate compounds in the cell and the intracellular retention of these cofactors, which are important substrates for most of the folate-dependent enzymes that are involved in one-carbon transfer reactions involved in purine, pyrimidine and amino acid synthesis. Essential for organellar and whole-plant folate homeostasis. In Arabidopsis thaliana (Mouse-ear cress), this protein is Folylpolyglutamate synthase.